The following is a 792-amino-acid chain: Phenylalanine--tRNA ligase beta subunit (792 aa).

A tRNA-binding domain is found at N38–F148. One can recognise a B5 domain in the interval E406–E482. Positions 460, 466, 469, and 470 each coordinate Mg(2+). Residues Y698 to R790 enclose the FDX-ACB domain.

This sequence belongs to the phenylalanyl-tRNA synthetase beta subunit family. Type 1 subfamily. As to quaternary structure, tetramer of two alpha and two beta subunits. Requires Mg(2+) as cofactor.

It localises to the cytoplasm. It carries out the reaction tRNA(Phe) + L-phenylalanine + ATP = L-phenylalanyl-tRNA(Phe) + AMP + diphosphate + H(+). The polypeptide is Phenylalanine--tRNA ligase beta subunit (Wolbachia sp. subsp. Brugia malayi (strain TRS)).